Here is a 279-residue protein sequence, read N- to C-terminus: Urease accessory protein UreD (279 aa).

Belongs to the UreD family. As to quaternary structure, ureD, UreF and UreG form a complex that acts as a GTP-hydrolysis-dependent molecular chaperone, activating the urease apoprotein by helping to assemble the nickel containing metallocenter of UreC. The UreE protein probably delivers the nickel.

Its subcellular location is the cytoplasm. Required for maturation of urease via the functional incorporation of the urease nickel metallocenter. In Rhodopseudomonas palustris (strain ATCC BAA-98 / CGA009), this protein is Urease accessory protein UreD.